A 614-amino-acid chain; its full sequence is Vitamin B12 transporter BtuB (614 aa).

Residues M1–A20 form the signal peptide. Residues D26–N33 carry the TonB box motif. Positions P38–T152 constitute a TBDR plug domain. Cyanocob(III)alamin contacts are provided by residues L83, S85, N92, and V110–S111. In terms of domain architecture, TBDR beta-barrel spans H155–F614. A run of 3 beta stranded transmembrane segments spans residues T158–G165, Y169–Q178, and T184–T195. Ca(2+) contacts are provided by D199, Q211, D213, and D215. 2 beta stranded membrane passes run F217–E227 and D232–N248. The Ca(2+) site is built by Y249 and D250. A251 is a cyanocob(III)alamin binding site. D261 lines the Ca(2+) pocket. A run of 14 beta stranded transmembrane segments spans residues R263–N277, E279–N296, T309–I325, H328–W337, Y353–G369, F371–D381, F385–I400, Y403–N417, K434–E443, V449–N458, Y473–F490, P494–A509, R517–W529, and D535–D550. T309 contacts cyanocob(III)alamin. R517 provides a ligand contact to cyanocob(III)alamin. Residue Y551 participates in cyanocob(III)alamin binding. The next 3 membrane-spanning stretches (beta stranded) occupy residues T558–A572, I585–V596, and A602–F614. The TonB C-terminal box motif lies at Y597–F614.

Belongs to the TonB-dependent receptor family. BtuB (TC 1.B.14.3.1) subfamily.

The protein resides in the cell outer membrane. Functionally, involved in the active translocation of vitamin B12 (cyanocobalamin) across the outer membrane to the periplasmic space. It derives its energy for transport by interacting with the trans-periplasmic membrane protein TonB. The protein is Vitamin B12 transporter BtuB of Escherichia coli O1:K1 / APEC.